Here is a 248-residue protein sequence, read N- to C-terminus: UDP-2,3-diacylglucosamine hydrolase (248 aa).

Positions 8, 10, 41, 79, and 114 each coordinate Mn(2+). Residue asparagine 79–arginine 80 coordinates substrate. 4 residues coordinate substrate: aspartate 122, asparagine 164, arginine 167, and histidine 195. Residues histidine 195 and histidine 197 each contribute to the Mn(2+) site.

It belongs to the LpxH family. It depends on Mn(2+) as a cofactor.

Its subcellular location is the cell inner membrane. It carries out the reaction UDP-2-N,3-O-bis[(3R)-3-hydroxytetradecanoyl]-alpha-D-glucosamine + H2O = 2-N,3-O-bis[(3R)-3-hydroxytetradecanoyl]-alpha-D-glucosaminyl 1-phosphate + UMP + 2 H(+). It participates in glycolipid biosynthesis; lipid IV(A) biosynthesis; lipid IV(A) from (3R)-3-hydroxytetradecanoyl-[acyl-carrier-protein] and UDP-N-acetyl-alpha-D-glucosamine: step 4/6. Functionally, hydrolyzes the pyrophosphate bond of UDP-2,3-diacylglucosamine to yield 2,3-diacylglucosamine 1-phosphate (lipid X) and UMP by catalyzing the attack of water at the alpha-P atom. Involved in the biosynthesis of lipid A, a phosphorylated glycolipid that anchors the lipopolysaccharide to the outer membrane of the cell. The polypeptide is UDP-2,3-diacylglucosamine hydrolase (Wigglesworthia glossinidia brevipalpis).